The following is a 155-amino-acid chain: Aspartate carbamoyltransferase regulatory chain (155 aa).

The Zn(2+) site is built by Cys109, Cys114, Cys138, and Cys141.

Belongs to the PyrI family. Contains catalytic and regulatory chains. It depends on Zn(2+) as a cofactor.

Involved in allosteric regulation of aspartate carbamoyltransferase. This chain is Aspartate carbamoyltransferase regulatory chain, found in Vibrio cholerae serotype O1 (strain ATCC 39541 / Classical Ogawa 395 / O395).